The following is a 354-amino-acid chain: FAD synthetase 1, chloroplastic (354 aa).

A chloroplast-targeting transit peptide spans 1–75; that stretch reads MLCGGSRASV…SQGDDHPELS (75 aa). Positions 228–248 are disordered; it reads SVNTEEEDSKSKERGQVSSTR.

It depends on Mg(2+) as a cofactor.

Its subcellular location is the plastid. It localises to the chloroplast. The enzyme catalyses FMN + ATP + H(+) = FAD + diphosphate. The protein operates within cofactor biosynthesis; FAD biosynthesis; FAD from FMN: step 1/1. Functionally, catalyzes the adenylation of flavin mononucleotide (FMN) to form flavin adenine dinucleotide (FAD) coenzyme. The chain is FAD synthetase 1, chloroplastic from Arabidopsis thaliana (Mouse-ear cress).